The primary structure comprises 123 residues: Large ribosomal subunit protein bL12 (123 aa).

It belongs to the bacterial ribosomal protein bL12 family. As to quaternary structure, homodimer. Part of the ribosomal stalk of the 50S ribosomal subunit. Forms a multimeric L10(L12)X complex, where L10 forms an elongated spine to which 2 to 4 L12 dimers bind in a sequential fashion. Binds GTP-bound translation factors.

In terms of biological role, forms part of the ribosomal stalk which helps the ribosome interact with GTP-bound translation factors. Is thus essential for accurate translation. The chain is Large ribosomal subunit protein bL12 from Rhodopseudomonas palustris (strain BisB18).